The sequence spans 234 residues: 7-cyano-7-deazaguanine synthase (234 aa).

An ATP-binding site is contributed by 7–17 (LSGGLDSAVCM). Zn(2+) is bound by residues Cys-197, Cys-208, Cys-211, and Cys-214.

This sequence belongs to the QueC family. It depends on Zn(2+) as a cofactor.

It carries out the reaction 7-carboxy-7-deazaguanine + NH4(+) + ATP = 7-cyano-7-deazaguanine + ADP + phosphate + H2O + H(+). It participates in purine metabolism; 7-cyano-7-deazaguanine biosynthesis. Its function is as follows. Catalyzes the ATP-dependent conversion of 7-carboxy-7-deazaguanine (CDG) to 7-cyano-7-deazaguanine (preQ(0)). The polypeptide is 7-cyano-7-deazaguanine synthase (Methanococcus aeolicus (strain ATCC BAA-1280 / DSM 17508 / OCM 812 / Nankai-3)).